The sequence spans 111 residues: Capsid assembly protein Gp31 (111 aa).

As to quaternary structure, homoheptamer. Forms a stable complex with groEL in the presence of ATP.

Its function is as follows. Essential for proper capsid assembly. In absence of Gp31 the major capsid protein (Gp23) assembles into 'lumps'. Acts as a co-chaperonin with the host groEL protein. This Escherichia coli (Bacteriophage T4) protein is Capsid assembly protein Gp31 (31).